The following is a 274-amino-acid chain: Energy-coupling factor transporter ATP-binding protein EcfA1 (274 aa).

Residues 11–245 (IELKNVKFKY…ERVIEIAKID (235 aa)) enclose the ABC transporter domain. Position 45 to 52 (45 to 52 (GHNGSGKS)) interacts with ATP.

It belongs to the ABC transporter superfamily. Energy-coupling factor EcfA family. As to quaternary structure, forms a stable energy-coupling factor (ECF) transporter complex composed of 2 membrane-embedded substrate-binding proteins (S component), 2 ATP-binding proteins (A component) and 2 transmembrane proteins (T component).

It localises to the cell membrane. Its function is as follows. ATP-binding (A) component of a common energy-coupling factor (ECF) ABC-transporter complex. Unlike classic ABC transporters this ECF transporter provides the energy necessary to transport a number of different substrates. This is Energy-coupling factor transporter ATP-binding protein EcfA1 from Mycoplasma mobile (strain ATCC 43663 / 163K / NCTC 11711) (Mesomycoplasma mobile).